The primary structure comprises 1058 residues: Receptor-type guanylate cyclase gcy-22 (1058 aa).

Residues 1 to 23 (MSFISKCFICLLFSTYFLPPVNS) form the signal peptide. Residues 25-470 (VLQVGFLAAN…PKSFTDQYLA (446 aa)) are Extracellular-facing. N-linked (GlcNAc...) asparagine glycosylation is found at Asn36, Asn73, Asn201, Asn215, Asn277, Asn302, Asn324, Asn350, and Asn386. Residues 471–491 (IILGCTAAALVLIIAVISTIV) form a helical membrane-spanning segment. Residues 492 to 1058 (FLVRSKRQEE…IEAKENGESI (567 aa)) lie on the Cytoplasmic side of the membrane. The Protein kinase domain maps to 501 to 809 (EERLNQLWQV…SSNLMDHVFN (309 aa)). Positions 811–840 (LEQYASNLEDEVQARMKELTEEKKRSDVLL) form a coiled coil. The Guanylate cyclase domain maps to 867 to 997 (TIFFSDVVSF…DSVNTASRME (131 aa)).

This sequence belongs to the adenylyl cyclase class-4/guanylyl cyclase family. In terms of tissue distribution, expression in ASER neuron begins at an early larval stage and is maintained in the adult.

It localises to the cell membrane. It carries out the reaction GTP = 3',5'-cyclic GMP + diphosphate. In terms of biological role, guanylate cyclase involved in the production of the second messenger cGMP. Regulates chemotaxis responses toward Li(1-), Mg(2+), Cl(1-), Br(1)- and I(1-) salt ions and methionine in ASE right (ASER) sensory neuron. May regulate ASER neuronal activity such as axon sprouting and calcium responses to changes in salt concentrations. This is Receptor-type guanylate cyclase gcy-22 from Caenorhabditis elegans.